Consider the following 299-residue polypeptide: tRNA dimethylallyltransferase (299 aa).

Residue 13-20 (GPTASGKT) coordinates ATP. Residue 15–20 (TASGKT) coordinates substrate. The interval 38-41 (DSRQ) is interaction with substrate tRNA.

This sequence belongs to the IPP transferase family. Monomer. The cofactor is Mg(2+).

The catalysed reaction is adenosine(37) in tRNA + dimethylallyl diphosphate = N(6)-dimethylallyladenosine(37) in tRNA + diphosphate. Its function is as follows. Catalyzes the transfer of a dimethylallyl group onto the adenine at position 37 in tRNAs that read codons beginning with uridine, leading to the formation of N6-(dimethylallyl)adenosine (i(6)A). The chain is tRNA dimethylallyltransferase from Prochlorococcus marinus (strain MIT 9515).